The following is a 396-amino-acid chain: Tryptophan synthase beta chain (396 aa).

An N6-(pyridoxal phosphate)lysine modification is found at lysine 86.

This sequence belongs to the TrpB family. Tetramer of two alpha and two beta chains. The cofactor is pyridoxal 5'-phosphate.

It catalyses the reaction (1S,2R)-1-C-(indol-3-yl)glycerol 3-phosphate + L-serine = D-glyceraldehyde 3-phosphate + L-tryptophan + H2O. The protein operates within amino-acid biosynthesis; L-tryptophan biosynthesis; L-tryptophan from chorismate: step 5/5. Its function is as follows. The beta subunit is responsible for the synthesis of L-tryptophan from indole and L-serine. In Francisella tularensis subsp. tularensis (strain FSC 198), this protein is Tryptophan synthase beta chain.